We begin with the raw amino-acid sequence, 1036 residues long: Chitin synthase 1 (1036 aa).

Pro residues predominate over residues 1–10 (MDGPPSPTRV). Positions 1 to 153 (MDGPPSPTRV…RRPLPPAPLF (153 aa)) are disordered. Asn38 is a glycosylation site (N-linked (GlcNAc...) asparagine). Positions 86–108 (PSIPLSSSNPRSPIRPSTPSRVS) are enriched in low complexity. N-linked (GlcNAc...) asparagine glycosylation occurs at Asn179. The interval 189-229 (RASLKSAHSYTTDSTFTEDDDITNEKLNHYGPAPEGRQDRR) is disordered. A compositionally biased stretch (polar residues) spans 194 to 203 (SAHSYTTDST). 7 consecutive transmembrane segments (helical) span residues 659–679 (FISL…FYFV), 699–719 (IFVI…ILSL), 733–753 (TMVT…YIVI), 776–796 (IFTN…LMSF), 808–828 (SAQY…YAFC), 908–928 (YVVA…SEAY), and 945–967 (WSVA…INIV). Residues 994–1019 (AGLGSGFSESGKTGITSGSGMSGMSL) form a disordered region. A compositionally biased stretch (low complexity) spans 1001-1019 (SESGKTGITSGSGMSGMSL).

The protein belongs to the chitin synthase family. Class II subfamily.

It localises to the cell membrane. It catalyses the reaction [(1-&gt;4)-N-acetyl-beta-D-glucosaminyl](n) + UDP-N-acetyl-alpha-D-glucosamine = [(1-&gt;4)-N-acetyl-beta-D-glucosaminyl](n+1) + UDP + H(+). In terms of biological role, polymerizes chitin, a structural polymer of the cell wall and septum, by transferring the sugar moiety of UDP-GlcNAc to the non-reducing end of the growing chitin polymer. CHS1 mainly responsible for normal yeast cell reproductive growth. The polypeptide is Chitin synthase 1 (Exophiala dermatitidis (strain ATCC 34100 / CBS 525.76 / NIH/UT8656) (Black yeast)).